The primary structure comprises 336 residues: Dihydroorotate dehydrogenase (quinone) (336 aa).

FMN contacts are provided by residues 62–66 (AGLDK) and Thr86. Lys66 contacts substrate. 111–115 (NRMGF) is a binding site for substrate. Asn139 and Asn172 together coordinate FMN. Asn172 provides a ligand contact to substrate. Residue Ser175 is the Nucleophile of the active site. Asn177 serves as a coordination point for substrate. Residues Lys217 and Thr245 each contribute to the FMN site. 246–247 (NT) is a substrate binding site. FMN is bound by residues Gly268, Gly297, and 318-319 (YS).

It belongs to the dihydroorotate dehydrogenase family. Type 2 subfamily. In terms of assembly, monomer. Requires FMN as cofactor.

Its subcellular location is the cell membrane. It catalyses the reaction (S)-dihydroorotate + a quinone = orotate + a quinol. It participates in pyrimidine metabolism; UMP biosynthesis via de novo pathway; orotate from (S)-dihydroorotate (quinone route): step 1/1. Its function is as follows. Catalyzes the conversion of dihydroorotate to orotate with quinone as electron acceptor. The chain is Dihydroorotate dehydrogenase (quinone) from Shigella dysenteriae serotype 1 (strain Sd197).